Consider the following 345-residue polypeptide: L-threonine 3-dehydrogenase (345 aa).

Cys-39 is a Zn(2+) binding site. Catalysis depends on charge relay system residues Thr-41 and His-44. Positions 64, 65, 94, 97, 100, and 108 each coordinate Zn(2+). Residues Ile-176, Asp-196, Arg-201, 263-265 (LGI), and 287-288 (VY) each bind NAD(+).

It belongs to the zinc-containing alcohol dehydrogenase family. Homotetramer. Zn(2+) serves as cofactor.

Its subcellular location is the cytoplasm. The enzyme catalyses L-threonine + NAD(+) = (2S)-2-amino-3-oxobutanoate + NADH + H(+). It functions in the pathway amino-acid degradation; L-threonine degradation via oxydo-reductase pathway; glycine from L-threonine: step 1/2. In terms of biological role, catalyzes the NAD(+)-dependent oxidation of L-threonine to 2-amino-3-ketobutyrate. In Anaeromyxobacter sp. (strain K), this protein is L-threonine 3-dehydrogenase.